A 119-amino-acid polypeptide reads, in one-letter code: NADH dehydrogenase [ubiquinone] 1 subunit C2 (119 aa).

Residues 56–75 (GLHRQLLYITAFFFAGYYLV) form a helical membrane-spanning segment.

It belongs to the complex I NDUFC2 subunit family. In terms of assembly, complex I is composed of 45 different subunits. Interacts with TMEM242.

Its subcellular location is the mitochondrion inner membrane. Accessory subunit of the mitochondrial membrane respiratory chain NADH dehydrogenase (Complex I), that is believed not to be involved in catalysis but required for the complex assembly. Complex I functions in the transfer of electrons from NADH to the respiratory chain. The immediate electron acceptor for the enzyme is believed to be ubiquinone. This Pan troglodytes (Chimpanzee) protein is NADH dehydrogenase [ubiquinone] 1 subunit C2.